The chain runs to 356 residues: Staphylococcal superantigen-like 3 (356 aa).

A signal peptide spans 1-30; sequence MKMRTIAKTSLALGLLTTGAITVTTQSVKA. Positions 61–165 are disordered; that stretch reads ATTQAANTRQ…TIKQAQTDMT (105 aa). Over residues 69 to 104 the composition is skewed to basic and acidic residues; it reads RQERTPKLEKAPNTNEEKTSASKIEKISQPKQEEQK. The span at 114-141 shows a compositional bias: low complexity; that stretch reads PKQEQSQTTTESTTPKTKVTTPPSTNTP. The segment covering 142–164 has biased composition (polar residues); that stretch reads QPMQSTKSDTPQSPTIKQAQTDM. Residues 228-326 form a sialyl Lewis X-binding region; sequence IDVFIVLEDN…VIKMKNGGKY (99 aa).

It belongs to the staphylococcal/streptococcal toxin family. As to quaternary structure, interacts with host TLR2 (via its extracellular domain).

Its subcellular location is the secreted. Secreted protein that plays an essential role in immune innate response inhibition by interacting with and inhibiting host TLR2. In turn, bacteria recognition by immune cells is impaired and cytokine production is inhibited. Mechanistically, by interacting with TLR2, blocks ligand binding and thus inhibits activation. Second, by interacting with an already formed TLR2-lipopeptide complex, prevents TLR heterodimerization and downstream signaling. The interaction with host TLR2 does not involve sialyl Lewis X interactions. The polypeptide is Staphylococcal superantigen-like 3 (Staphylococcus aureus (strain NCTC 8325 / PS 47)).